The following is a 370-amino-acid chain: 3-isopropylmalate dehydrogenase (370 aa).

NAD(+) is bound at residue 77–90 (GPKWDAVPYDARPE). Substrate-binding residues include Arg97, Arg107, Arg135, and Asp226. Mg(2+)-binding residues include Asp226, Asp250, and Asp254. Position 290–302 (290–302 (GSAPDIAGKGLAN)) interacts with NAD(+).

Belongs to the isocitrate and isopropylmalate dehydrogenases family. LeuB type 1 subfamily. In terms of assembly, homodimer. Requires Mg(2+) as cofactor. Mn(2+) serves as cofactor.

The protein resides in the cytoplasm. It catalyses the reaction (2R,3S)-3-isopropylmalate + NAD(+) = 4-methyl-2-oxopentanoate + CO2 + NADH. It functions in the pathway amino-acid biosynthesis; L-leucine biosynthesis; L-leucine from 3-methyl-2-oxobutanoate: step 3/4. Catalyzes the oxidation of 3-carboxy-2-hydroxy-4-methylpentanoate (3-isopropylmalate) to 3-carboxy-4-methyl-2-oxopentanoate. The product decarboxylates to 4-methyl-2 oxopentanoate. This chain is 3-isopropylmalate dehydrogenase, found in Rhodopseudomonas palustris (strain HaA2).